A 171-amino-acid polypeptide reads, in one-letter code: Protein ups1 homolog (171 aa).

The tract at residues 1-79 is required for mitochondrial targeting; it reads MTAICTDKTE…LNVNKSYILE (79 aa). Positions 2–171 constitute a PRELI/MSF1 domain; sequence TAICTDKTEL…YVIQQKFQPS (170 aa).

Its subcellular location is the mitochondrion inner membrane. The protein localises to the mitochondrion intermembrane space. Its function is as follows. Required for maintenance of normal mitochondrial morphology as well as PCP1-dependent processing of MGM1. This is Protein ups1 homolog from Schizosaccharomyces pombe (strain 972 / ATCC 24843) (Fission yeast).